We begin with the raw amino-acid sequence, 254 residues long: Phosphoglycerate mutase 1 (254 aa).

Substrate is bound by residues 10–17 and 23–24; these read RHGESAWN and SG. The Tele-phosphohistidine intermediate role is filled by His11. 2 positions are modified to phosphoserine: Ser14 and Ser23. Residue Tyr26 is modified to Phosphotyrosine. Ser31 is subject to Phosphoserine. Residues Arg62, 89 to 92, and Lys100 contribute to the substrate site; that span reads ERHY. Residue Glu89 is the Proton donor/acceptor of the active site. Lys106 bears the N6-acetyllysine mark. 116–117 lines the substrate pocket; it reads RR. Position 118 is a phosphoserine (Ser118). Substrate is bound at residue 187–188; the sequence is GN. Lys251 is modified (N6-acetyllysine; alternate). Lys251 carries the N6-succinyllysine; alternate modification. N6-acetyllysine is present on residues Lys253 and Lys254.

This sequence belongs to the phosphoglycerate mutase family. BPG-dependent PGAM subfamily. Homodimer. Post-translationally, acetylated at Lys-253, Lys-253 and Lys-254 under high glucose condition. Acetylation increases catalytic activity. Under glucose restriction SIRT1 levels dramatically increase and it deacetylates the enzyme.

It catalyses the reaction (2R)-2-phosphoglycerate = (2R)-3-phosphoglycerate. The catalysed reaction is (2R)-3-phospho-glyceroyl phosphate = (2R)-2,3-bisphosphoglycerate + H(+). In terms of biological role, catalyzes the interconversion of 2-phosphoglycerate and 3-phosphoglyceratea crucial step in glycolysis, by using 2,3-bisphosphoglycerate. Also catalyzes the interconversion of (2R)-2,3-bisphosphoglycerate and (2R)-3-phospho-glyceroyl phosphate. This is Phosphoglycerate mutase 1 from Mus musculus (Mouse).